A 120-amino-acid polypeptide reads, in one-letter code: UPF0231 protein KPK_4613 (120 aa).

This sequence belongs to the UPF0231 family.

In Klebsiella pneumoniae (strain 342), this protein is UPF0231 protein KPK_4613.